The chain runs to 278 residues: Rhamnulose-1-phosphate aldolase (278 aa).

Glu116 is an active-site residue. Zn(2+) contacts are provided by His139, His141, and His210.

This sequence belongs to the aldolase class II family. RhaD subfamily. Zn(2+) is required as a cofactor.

Its subcellular location is the cytoplasm. It carries out the reaction L-rhamnulose 1-phosphate = (S)-lactaldehyde + dihydroxyacetone phosphate. Its pathway is carbohydrate degradation; L-rhamnose degradation; glycerone phosphate from L-rhamnose: step 3/3. Its function is as follows. Catalyzes the reversible cleavage of L-rhamnulose-1-phosphate to dihydroxyacetone phosphate (DHAP) and L-lactaldehyde. In Listeria welshimeri serovar 6b (strain ATCC 35897 / DSM 20650 / CCUG 15529 / CIP 8149 / NCTC 11857 / SLCC 5334 / V8), this protein is Rhamnulose-1-phosphate aldolase.